Here is a 479-residue protein sequence, read N- to C-terminus: Beta-monoglucosyldiacylglycerol synthase (479 aa).

4 helical membrane-spanning segments follow: residues 48 to 68, 363 to 383, 389 to 409, and 428 to 448; these read AAVM…WVWG, FLLM…MALW, LLTP…YYGL, and LART…MPAV.

Belongs to the glycosyltransferase 2 family. Requires Mg(2+) as cofactor.

Its subcellular location is the membrane. The catalysed reaction is a 1,2-diacyl-sn-glycerol + UDP-alpha-D-glucose = a 1,2-diacyl-3-O-(beta-D-glucopyranosyl)-sn-glycerol + UDP + H(+). Functionally, glucosyltransferase involved in the biosynthesis of the non-bilayer-forming membrane lipid beta-monoglucosyldiacylglycerol which contributes to regulate the properties and stability of the membrane. Catalyzes the transfer of a glucosyl residue from UDP-Glc to diacylglycerol (DAG) acceptor to form the corresponding beta-glucosyl-DAG (1,2-diacyl-3-O-(beta-D-glucopyranosyl)-sn-glycerol). It can only use UDP-Glc as sugar donor. Two types of DAG (dipalmitoyl-DAG (DPDAG) and 1-oleoyl-2-palmitoyl-DAG (OPDAG)) can be used as sugar acceptors, but OPDAG is preferred. The protein is Beta-monoglucosyldiacylglycerol synthase of Synechocystis sp. (strain ATCC 27184 / PCC 6803 / Kazusa).